Consider the following 225-residue polypeptide: Rho GDP-dissociation inhibitor 3 (225 aa).

It belongs to the Rho GDI family. Primarily expressed in pancreas and brain.

The protein localises to the cytoplasm. Its function is as follows. Inhibits GDP/GTP exchange reaction of RhoB. Interacts specifically with the GDP- and GTP-bound forms of post-translationally processed Rhob and Rhog proteins, both of which show a growth-regulated expression in mammalian cells. Stimulates the release of the GDP-bound but not the GTP-bound RhoB protein. Also inhibits the GDP/GTP exchange of RhoB but shows less ability to inhibit the dissociation of prebound GTP. The polypeptide is Rho GDP-dissociation inhibitor 3 (ARHGDIG) (Homo sapiens (Human)).